A 445-amino-acid chain; its full sequence is Chromosomal replication initiator protein DnaA (445 aa).

Residues 1–72 are domain I, interacts with DnaA modulators; that stretch reads MSGIDTIWEK…QEAFIEEIGE (72 aa). Residues 72–107 are domain II; sequence EKLNIKVISSEDELMNNEKEAPVRKTQQTSQELLPN. The tract at residues 108 to 324 is domain III, AAA+ region; sequence QLNTDNTFDT…GALTRVSAYS (217 aa). ATP is bound by residues glycine 152, glycine 154, lysine 155, and threonine 156. Positions 325–445 are domain IV, binds dsDNA; the sequence is KLVNRELNSD…LKNIEKDITS (121 aa).

Belongs to the DnaA family. Oligomerizes as a right-handed, spiral filament on DNA at oriC.

Its subcellular location is the cytoplasm. In terms of biological role, plays an essential role in the initiation and regulation of chromosomal replication. ATP-DnaA binds to the origin of replication (oriC) to initiate formation of the DNA replication initiation complex once per cell cycle. Binds the DnaA box (a 9 base pair repeat at the origin) and separates the double-stranded (ds)DNA. Forms a right-handed helical filament on oriC DNA; dsDNA binds to the exterior of the filament while single-stranded (ss)DNA is stabiized in the filament's interior. The ATP-DnaA-oriC complex binds and stabilizes one strand of the AT-rich DNA unwinding element (DUE), permitting loading of DNA polymerase. After initiation quickly degrades to an ADP-DnaA complex that is not apt for DNA replication. Binds acidic phospholipids. The protein is Chromosomal replication initiator protein DnaA of Macrococcus caseolyticus (strain JCSC5402) (Macrococcoides caseolyticum).